The primary structure comprises 275 residues: Putative acyl-[acyl-carrier-protein] desaturase DesA2 (275 aa).

The Fe cation site is built by E107, H110, E159, E189, and H192.

Belongs to the fatty acid desaturase type 2 family. In terms of assembly, homodimer. Fe(2+) serves as cofactor.

It functions in the pathway lipid metabolism; fatty acid metabolism. Its function is as follows. May be a desaturase involved in mycobacterial fatty acid biosynthesis. This chain is Putative acyl-[acyl-carrier-protein] desaturase DesA2 (desA2), found in Mycobacterium tuberculosis (strain CDC 1551 / Oshkosh).